The chain runs to 148 residues: Lysozyme C-3 (148 aa).

Positions 1–18 (MKTLLVLALLLLSVSVQA) are cleaved as a signal peptide. Residues 19–148 (KVYDRCEFAR…VSQYIRGCKL (130 aa)) form the C-type lysozyme domain. 4 disulfides stabilise this stretch: Cys24–Cys146, Cys48–Cys134, Cys83–Cys99, and Cys95–Cys113. Catalysis depends on residues Glu53 and Asp71.

Belongs to the glycosyl hydrolase 22 family. In terms of assembly, monomer.

Its subcellular location is the secreted. The catalysed reaction is Hydrolysis of (1-&gt;4)-beta-linkages between N-acetylmuramic acid and N-acetyl-D-glucosamine residues in a peptidoglycan and between N-acetyl-D-glucosamine residues in chitodextrins.. Its function is as follows. Lysozymes have primarily a bacteriolytic function; those in tissues and body fluids are associated with the monocyte-macrophage system and enhance the activity of immunoagents. This is Lysozyme C-3 from Sus scrofa (Pig).